Reading from the N-terminus, the 273-residue chain is Large ribosomal subunit protein uL2cz/uL2cy (273 aa).

Disordered regions lie at residues 1-25 (MAIH…VKSN) and 224-273 (NPVD…RRRK).

The protein belongs to the universal ribosomal protein uL2 family. As to quaternary structure, part of the 50S ribosomal subunit.

Its subcellular location is the plastid. The protein localises to the chloroplast. This chain is Large ribosomal subunit protein uL2cz/uL2cy (rpl2-A), found in Phalaenopsis aphrodite subsp. formosana (Moth orchid).